Reading from the N-terminus, the 103-residue chain is Small ribosomal subunit protein uS10 (103 aa).

Belongs to the universal ribosomal protein uS10 family. Part of the 30S ribosomal subunit.

Its function is as follows. Involved in the binding of tRNA to the ribosomes. The polypeptide is Small ribosomal subunit protein uS10 (Clostridioides difficile (strain 630) (Peptoclostridium difficile)).